The following is a 342-amino-acid chain: tRNA N6-adenosine threonylcarbamoyltransferase (342 aa).

Residues histidine 111 and histidine 115 each coordinate Fe cation. Substrate-binding positions include 134 to 138, aspartate 167, glycine 180, and asparagine 276; that span reads LVSGG. Position 304 (aspartate 304) interacts with Fe cation.

This sequence belongs to the KAE1 / TsaD family. Fe(2+) serves as cofactor.

It is found in the cytoplasm. The catalysed reaction is L-threonylcarbamoyladenylate + adenosine(37) in tRNA = N(6)-L-threonylcarbamoyladenosine(37) in tRNA + AMP + H(+). Functionally, required for the formation of a threonylcarbamoyl group on adenosine at position 37 (t(6)A37) in tRNAs that read codons beginning with adenine. Is involved in the transfer of the threonylcarbamoyl moiety of threonylcarbamoyl-AMP (TC-AMP) to the N6 group of A37, together with TsaE and TsaB. TsaD likely plays a direct catalytic role in this reaction. In Helicobacter acinonychis (strain Sheeba), this protein is tRNA N6-adenosine threonylcarbamoyltransferase.